The following is a 601-amino-acid chain: 1-deoxy-D-xylulose-5-phosphate synthase (601 aa).

Thiamine diphosphate is bound by residues His63 and 104–106; that span reads GHS. Asp135 contacts Mg(2+). Thiamine diphosphate is bound by residues 136-137, Asn164, Tyr272, and Glu353; that span reads GS. Mg(2+) is bound at residue Asn164.

The protein belongs to the transketolase family. DXPS subfamily. Homodimer. Mg(2+) serves as cofactor. Thiamine diphosphate is required as a cofactor.

The catalysed reaction is D-glyceraldehyde 3-phosphate + pyruvate + H(+) = 1-deoxy-D-xylulose 5-phosphate + CO2. It participates in metabolic intermediate biosynthesis; 1-deoxy-D-xylulose 5-phosphate biosynthesis; 1-deoxy-D-xylulose 5-phosphate from D-glyceraldehyde 3-phosphate and pyruvate: step 1/1. Catalyzes the acyloin condensation reaction between C atoms 2 and 3 of pyruvate and glyceraldehyde 3-phosphate to yield 1-deoxy-D-xylulose-5-phosphate (DXP). In Aliarcobacter butzleri (strain RM4018) (Arcobacter butzleri), this protein is 1-deoxy-D-xylulose-5-phosphate synthase.